The chain runs to 545 residues: Triacylglycerol lipase ptl1 (545 aa).

Residues 182–358 (LYFNGGTAFG…EVCTPKNFIW (177 aa)) enclose the PNPLA domain. The GXSXG signature appears at 213–217 (GCASG).

The protein resides in the lipid droplet. The catalysed reaction is a triacylglycerol + H2O = a diacylglycerol + a fatty acid + H(+). Lipid particle-localized triacylglycerol (TAG) lipase. The lipid droplet/particle is a lipid storage compartment which serves as a depot of energy and building blocks for membrane lipid biosynthesis. Involved in the mobilization of the non-polar storage lipids triacylglycerols (TAGs) from lipid particles by hydrolysis of TAGs, releasing and supplying specific fatty acids to the appropriate metabolic pathways. In Schizosaccharomyces pombe (strain 972 / ATCC 24843) (Fission yeast), this protein is Triacylglycerol lipase ptl1 (ptl1).